We begin with the raw amino-acid sequence, 416 residues long: MRTEIISIGNELLQGQILDSNAQHISTALSQIGLKVMQITVLPDEIEAIVEALAATKQRSCKIVITTGGLGPTSDDVTKEALAKYLDCPAVVFSKERLSNLGGVDTPVIQYLERATNSSVNISDLQLGGIKNVLGTAPGIYCKQNNQILIVLPGVPTEMQAMLRDTVLPYLQSNFTLPIFYQKTICTIGISEEEIAAILAPWESRLPAPIKLAYLPDLATVKITLAATVPTWEESKRLVEEEFLRVLPLIEPYVYGYNTDTIEEVISRLLKSQKNSLSVAESCTGGYVSQLITQVPGSSVYYQGGIVAYNNTAKHKILGVARNTLLQYGAVSQETAMEMARNVRLKLKANIGLATTGIAGPGGGTIEHPVGTIWIAYADENTCYAQKLQLTNNRLYNIQLTAYHLLDLLRKKLQGK.

It belongs to the CinA family.

The protein is CinA-like protein of Amoebophilus asiaticus (strain 5a2).